We begin with the raw amino-acid sequence, 120 residues long: Large ribosomal subunit protein uL14 (120 aa).

This sequence belongs to the universal ribosomal protein uL14 family. Part of the 50S ribosomal subunit. Forms a cluster with proteins L3 and L19. In the 70S ribosome, L14 and L19 interact and together make contacts with the 16S rRNA in bridges B5 and B8.

Functionally, binds to 23S rRNA. Forms part of two intersubunit bridges in the 70S ribosome. This chain is Large ribosomal subunit protein uL14, found in Dictyoglomus thermophilum (strain ATCC 35947 / DSM 3960 / H-6-12).